A 347-amino-acid polypeptide reads, in one-letter code: MNPLIFIIIMFTLILGTVITMISSHWLLIWMGLEMNMFSMIPIIMMKSHPRSTEAATKYFMTQATASMLLMMGVIINLYYSGQWTIMNSLNPVTSYMMTIALAMKLGLAPFHFWVPEVTQGTQLTSGMILLTWQKLAPMTILYQIHSSLNLNLMLTLAILSILIGGWGGLNQTQLRKIMAYSSIAHMGWMTAIIMYNTSLMMLNLVIYLMMTITMFALFINSTTTTTLSLSLTWNSTPILTTMLLTTLLSLGGLPPLSGFAPKWMIIQEMTKNNMLLLPTTMAIMALLNLYFYMRLIYSTSLTMFPTTNNNKMKWKYKTQNFIPLSPTLITLSTMLIPLTPMMLILN.

The next 10 membrane-spanning stretches (helical) occupy residues 3–23 (PLIF…TMIS), 26–46 (WLLI…IIMM), 67–87 (SMLL…WTIM), 96–116 (YMMT…FWVP), 149–169 (LNLN…GWGG), 178–198 (IMAY…MYNT), 200–220 (LMML…ALFI), 239–259 (ILTT…PLSG), 274–294 (NMLL…YFYM), and 325–345 (LSPT…MMLI).

This sequence belongs to the complex I subunit 2 family. In terms of assembly, core subunit of respiratory chain NADH dehydrogenase (Complex I) which is composed of 45 different subunits. Interacts with TMEM242.

It localises to the mitochondrion inner membrane. The enzyme catalyses a ubiquinone + NADH + 5 H(+)(in) = a ubiquinol + NAD(+) + 4 H(+)(out). In terms of biological role, core subunit of the mitochondrial membrane respiratory chain NADH dehydrogenase (Complex I) which catalyzes electron transfer from NADH through the respiratory chain, using ubiquinone as an electron acceptor. Essential for the catalytic activity and assembly of complex I. The sequence is that of NADH-ubiquinone oxidoreductase chain 2 from Dasypus novemcinctus (Nine-banded armadillo).